The chain runs to 626 residues: tRNA uridine 5-carboxymethylaminomethyl modification enzyme MnmG (626 aa).

Position 13-18 (13-18 (GGGHAG)) interacts with FAD. An NAD(+)-binding site is contributed by 273–287 (GPRYCPSIEDKIHRF).

Belongs to the MnmG family. As to quaternary structure, homodimer. Heterotetramer of two MnmE and two MnmG subunits. FAD serves as cofactor.

The protein resides in the cytoplasm. Its function is as follows. NAD-binding protein involved in the addition of a carboxymethylaminomethyl (cmnm) group at the wobble position (U34) of certain tRNAs, forming tRNA-cmnm(5)s(2)U34. The polypeptide is tRNA uridine 5-carboxymethylaminomethyl modification enzyme MnmG (Acinetobacter baumannii (strain SDF)).